The primary structure comprises 373 residues: MAKRDYYEVLGVNKSASKDEIKKAYRKLSKKYHPDINKEEGADEKFKEISEAYEVLSDENKRANYDQFGHDGPQGGFGSQGFGGSDFGGFEDIFSSFFGGGSRQRDPNAPRKGDDLQYTMTITFEEAVFGTKKEISIKKDVTCHTCNGDGAKPGTSKKTCSYCNGAGRVSVEQNTILGRVRTEQVCPKCEGSGQEFEEPCPTCKGKGTENKTVKLEVTVPEGVDNEQQVRLAGEGSPGVNGGPHGDLYVVFRVKPSNTFERDGDDIYYNLDISFSQAALGDEIKIPTLKSNVVLTIPAGTQTGKQFRLKDKGVKNVHGYGHGDLFVNIKVVTPTKLNDRQKELLKEFAEINGEDINEQSSNFKDRAKRFFKGE.

One can recognise a J domain in the interval 5–69 (DYYEVLGVNK…NKRANYDQFG (65 aa)). Residues 130-212 (GTKKEISIKK…CKGKGTENKT (83 aa)) form a CR-type zinc finger. Positions 143, 146, 160, 163, 186, 189, 200, and 203 each coordinate Zn(2+). CXXCXGXG motif repeat units follow at residues 143-150 (CHTCNGDG), 160-167 (CSYCNGAG), 186-193 (CPKCEGSG), and 200-207 (CPTCKGKG).

The protein belongs to the DnaJ family. Homodimer. Zn(2+) serves as cofactor.

The protein resides in the cytoplasm. Participates actively in the response to hyperosmotic and heat shock by preventing the aggregation of stress-denatured proteins and by disaggregating proteins, also in an autonomous, DnaK-independent fashion. Unfolded proteins bind initially to DnaJ; upon interaction with the DnaJ-bound protein, DnaK hydrolyzes its bound ATP, resulting in the formation of a stable complex. GrpE releases ADP from DnaK; ATP binding to DnaK triggers the release of the substrate protein, thus completing the reaction cycle. Several rounds of ATP-dependent interactions between DnaJ, DnaK and GrpE are required for fully efficient folding. Also involved, together with DnaK and GrpE, in the DNA replication of plasmids through activation of initiation proteins. This chain is Chaperone protein DnaJ, found in Staphylococcus epidermidis (strain ATCC 12228 / FDA PCI 1200).